Reading from the N-terminus, the 322-residue chain is Probable F-box protein At1g60180 (322 aa).

In terms of domain architecture, F-box spans 45-88; that stretch reads FCELSDECIAKILSGCPILESLTLSHCIYLTVLDLSKSLRLRTL.

This is Probable F-box protein At1g60180 from Arabidopsis thaliana (Mouse-ear cress).